A 242-amino-acid polypeptide reads, in one-letter code: 1-(5-phosphoribosyl)-5-[(5-phosphoribosylamino)methylideneamino] imidazole-4-carboxamide isomerase (242 aa).

Aspartate 8 (proton acceptor) is an active-site residue. Residue aspartate 129 is the Proton donor of the active site.

It belongs to the HisA/HisF family.

It is found in the cytoplasm. The catalysed reaction is 1-(5-phospho-beta-D-ribosyl)-5-[(5-phospho-beta-D-ribosylamino)methylideneamino]imidazole-4-carboxamide = 5-[(5-phospho-1-deoxy-D-ribulos-1-ylimino)methylamino]-1-(5-phospho-beta-D-ribosyl)imidazole-4-carboxamide. It functions in the pathway amino-acid biosynthesis; L-histidine biosynthesis; L-histidine from 5-phospho-alpha-D-ribose 1-diphosphate: step 4/9. The chain is 1-(5-phosphoribosyl)-5-[(5-phosphoribosylamino)methylideneamino] imidazole-4-carboxamide isomerase from Clostridium botulinum (strain ATCC 19397 / Type A).